We begin with the raw amino-acid sequence, 475 residues long: Serralysin G (475 aa).

A propeptide spanning residues 1–14 (MALYGKKTDLSSAS) is cleaved from the precursor. Position 186 (H186) interacts with Zn(2+). E187 is an active-site residue. H190 and Y226 together coordinate Zn(2+). Ca(2+) is bound by residues R261, G263, T265, D293, G295, G296, D298, E337, G342, G344, D346, N351, N355, G359, G360, A361, G362, D364, G368, G370, G371, D373, G377, G378, A379, G380, D382, D391, D398, and D408. Hemolysin-type calcium-binding repeat units lie at residues 340-357 (IGGS…DNRI) and 358-375 (DGGA…ADIL).

This sequence belongs to the peptidase M10B family. It depends on Ca(2+) as a cofactor. Zn(2+) is required as a cofactor.

The protein resides in the secreted. The enzyme catalyses Preferential cleavage of bonds with hydrophobic residues in P1'.. This chain is Serralysin G (prtG), found in Dickeya chrysanthemi (Pectobacterium chrysanthemi).